The following is a 141-amino-acid chain: Cystatin (141 aa).

The N-terminal stretch at methionine 1 to methionine 26 is a signal peptide. Residues glycine 29–tryptophan 129 enclose the Cystatin domain. Positions glutamine 73–glycine 77 match the Secondary area of contact motif. 2 disulfide bridges follow: cysteine 91–cysteine 107 and cysteine 120–cysteine 140.

Belongs to the cystatin family. In terms of tissue distribution, expressed at a low level by the venom gland (at protein level).

Its subcellular location is the secreted. Inhibits various C1 cysteine proteases including cathepsin L, papain and cathepsin B. This protein has no toxic activity and its function in the venom is unknown. It may play a role as a housekeeping or regulatory protein. This Oxyuranus scutellatus scutellatus (Australian taipan) protein is Cystatin.